A 504-amino-acid polypeptide reads, in one-letter code: Peroxisomal N(1)-acetyl-spermine/spermidine oxidase (504 aa).

Residues A16, E37, R45, and 61–62 (HW) contribute to the FAD site. Residues H64 and V187 each coordinate substrate. V240 is a binding site for FAD. N313 lines the substrate pocket. Residues E465 and 474-475 (TT) contribute to the FAD site. Residues 502–504 (PRL) carry the Microbody targeting signal motif.

This sequence belongs to the flavin monoamine oxidase family. In terms of assembly, monomer. Requires FAD as cofactor. In terms of tissue distribution, widely expressed at different developmental stages. Expressed at high level in the liver and the stomach, expressed at lower level in heart, spleen, thymus, small intestine, muscle, pancreas, uterus, and breast and expressed at very low level in brain, kidney, lung, testis, skin, adrenal gland and prostate gland.

Its subcellular location is the peroxisome. It localises to the cytoplasm. The enzyme catalyses N(1)-acetylspermine + O2 + H2O = 3-acetamidopropanal + spermidine + H2O2. The catalysed reaction is N(1)-acetylspermidine + O2 + H2O = 3-acetamidopropanal + putrescine + H2O2. It catalyses the reaction N(1),N(12)-diacetylspermine + O2 + H2O = 3-acetamidopropanal + N(1)-acetylspermidine + H2O2. It participates in amine and polyamine metabolism; spermine metabolism. Its function is as follows. Flavoenzyme which catalyzes the oxidation of N(1)-acetylspermine to spermidine and is thus involved in the polyamine back-conversion. Can also oxidize N(1)-acetylspermidine to putrescine. Substrate specificity: N(1)-acetylspermine = N(1)-acetylspermidine &gt; N(1),N(12)-diacylspermine &gt;&gt; spermine. Does not oxidize spermidine. Plays an important role in the regulation of polyamine intracellular concentration and has the potential to act as a determinant of cellular sensitivity to the antitumor polyamine analogs. The sequence is that of Peroxisomal N(1)-acetyl-spermine/spermidine oxidase (Paox) from Mus musculus (Mouse).